The sequence spans 656 residues: Ankyrin repeat and SAM domain-containing protein 3 (656 aa).

The interval 1–422 (MSELSDEASE…AESSPQTQRA (422 aa)) is interaction with NEK7. Residues serine 2 and serine 5 each carry the phosphoserine modification. 6 ANK repeats span residues 34 to 64 (DVPLDLHTAASIGQYEVVKECVQRRELDLNK), 68 to 97 (GGWTPLMYASYIGHDTIVHLLLEAGVSVNV), 101 to 130 (EGQTPLMLASSCGNESIAYFLLQQGAELEM), 134 to 163 (QGWTALFHCTSAGHQHMVRFLLDSGANANV), 168 to 197 (CGFTPLMEAAAAGHEIIVQYFLNHGVKVDA), and 201 to 220 (SGATARMLAKQYGHMKIVAL). Asparagine 96 carries the 3-hydroxyasparagine modification. Phosphoserine is present on residues serine 201, serine 225, serine 243, serine 244, and serine 245. Disordered stretches follow at residues 235-265 (SPEKYEDLSSSDESCPAPQRQRPCRKKGVSI) and 277-312 (GIGLGGRAPRPRYEQAPPRGYVTFNSSGENPLEEEG). Threonine 319 is subject to Phosphothreonine. Residues serine 320, serine 368, serine 371, and serine 375 each carry the phosphoserine modification. Residues 346-425 (GPVQSSSSSE…SPQTQRAPYS (80 aa)) form a disordered region. Residues 425-488 (SGPQDLAALL…TSAIARWHSS (64 aa)) form the SAM domain. Residues 501-526 (ADRLEAEMQELAIQLHKRCEEVEATR) adopt a coiled-coil conformation. A Phosphoserine modification is found at serine 541.

Homooligomer. Interacts (via SAM domain) with ANKS6 (via SAM domain). Interacts with BICC1. Interacts with NPHP1. Interacts with NEK8. Interacts with HIF1AN. Interacts with NEK7; this interaction alters the subcellular distribution of NEK7 by preventing its nuclear translocation. Hydroxylated at Asn-96, most probably by HIF1AN. In terms of processing, phosphorylations at Ser-5, Ser-225, Thr-319, Ser-320, Ser-368 and Ser-371 occur in a NEK7-dependent manner. Post-translationally, polyubiquitinated.

It localises to the cell projection. Its subcellular location is the cilium. It is found in the cytoplasm. In terms of biological role, may be involved in vasopressin signaling in the kidney. The chain is Ankyrin repeat and SAM domain-containing protein 3 (ANKS3) from Homo sapiens (Human).